We begin with the raw amino-acid sequence, 358 residues long: Biotin synthase (358 aa).

The Radical SAM core domain occupies Asn50–Arg277. Cys65, Cys69, and Cys72 together coordinate [4Fe-4S] cluster. Residues Cys109, Cys140, Cys200, and Arg272 each contribute to the [2Fe-2S] cluster site.

This sequence belongs to the radical SAM superfamily. Biotin synthase family. Homodimer. [4Fe-4S] cluster is required as a cofactor. Requires [2Fe-2S] cluster as cofactor.

It carries out the reaction (4R,5S)-dethiobiotin + (sulfur carrier)-SH + 2 reduced [2Fe-2S]-[ferredoxin] + 2 S-adenosyl-L-methionine = (sulfur carrier)-H + biotin + 2 5'-deoxyadenosine + 2 L-methionine + 2 oxidized [2Fe-2S]-[ferredoxin]. The protein operates within cofactor biosynthesis; biotin biosynthesis; biotin from 7,8-diaminononanoate: step 2/2. Functionally, catalyzes the conversion of dethiobiotin (DTB) to biotin by the insertion of a sulfur atom into dethiobiotin via a radical-based mechanism. This is Biotin synthase from Cellvibrio japonicus (strain Ueda107) (Pseudomonas fluorescens subsp. cellulosa).